The primary structure comprises 498 residues: Cytochrome c-552 (498 aa).

An N-terminal signal peptide occupies residues M1–A31. Residue H119 participates in heme c binding. Heme contacts are provided by C148, C151, and K152. Heme c contacts are provided by C186, C189, H190, C228, C231, and H232. Residues E234, Y235, K280, and Q282 each contribute to the Ca(2+) site. Substrate is bound at residue Y235. H283 lines the substrate pocket. 9 residues coordinate heme c: H294, C301, C304, H305, H319, C332, C335, H336, and H411.

It belongs to the cytochrome c-552 family. Ca(2+) serves as cofactor. The cofactor is heme c.

The protein resides in the periplasm. The catalysed reaction is 6 Fe(III)-[cytochrome c] + NH4(+) + 2 H2O = 6 Fe(II)-[cytochrome c] + nitrite + 8 H(+). It functions in the pathway nitrogen metabolism; nitrate reduction (assimilation). Its function is as follows. Catalyzes the reduction of nitrite to ammonia, consuming six electrons in the process. The protein is Cytochrome c-552 of Porphyromonas gingivalis (strain ATCC BAA-308 / W83).